Consider the following 237-residue polypeptide: LexA repressor (237 aa).

Residues 26 to 46 constitute a DNA-binding region (H-T-H motif); that stretch reads FDEMKEALDLRSKSGIHRLIT. Residues Ser-158 and Lys-196 each act as for autocatalytic cleavage activity in the active site.

The protein belongs to the peptidase S24 family. In terms of assembly, homodimer.

It carries out the reaction Hydrolysis of Ala-|-Gly bond in repressor LexA.. Functionally, represses a number of genes involved in the response to DNA damage (SOS response), including recA and lexA. In the presence of single-stranded DNA, RecA interacts with LexA causing an autocatalytic cleavage which disrupts the DNA-binding part of LexA, leading to derepression of the SOS regulon and eventually DNA repair. In Xanthobacter autotrophicus (strain ATCC BAA-1158 / Py2), this protein is LexA repressor.